We begin with the raw amino-acid sequence, 293 residues long: Small ribosomal subunit protein uS5 (293 aa).

The interval 1-55 (MADDAGAAGGPGGPGGPGLGGRGGFRGGFGSGLRGRGRGRGRGRGRGRGARGGKA) is disordered. A2 carries the N-acetylalanine modification. Residues 7–34 (AAGGPGGPGGPGLGGRGGFRGGFGSGLR) are compositionally biased toward gly residues. 14 repeat units span residues 9–11 (GGP), 12–14 (GGP), 15–17 (GGP), 22–25 (RGGF), 26–29 (RGGF), 34–35 (RG), 36–37 (RG), 38–39 (RG), 40–41 (RG), 42–43 (RG), 44–45 (RG), 46–47 (RG), 48–49 (RG), and 51–52 (RG). Residues 9–17 (GGPGGPGGP) are 3 X 3 AA tandem repeats of G-G-P. A 2 X 4 AA tandem repeats of R-G-G-F region spans residues 22-29 (RGGFRGGF). A 9 X 2 AA tandem repeats of R-G region spans residues 34–52 (RGRGRGRGRGRGRGRGARG). Basic residues predominate over residues 35-51 (GRGRGRGRGRGRGRGAR). Glycyl lysine isopeptide (Lys-Gly) (interchain with G-Cter in ubiquitin) cross-links involve residues K54 and K58. The S5 DRBM domain maps to 102-165 (LKDEVLKIMP…ILAKLSIVPV (64 aa)). T252 bears the Phosphothreonine mark. The residue at position 263 (K263) is an N6-acetyllysine. At S264 the chain carries Phosphoserine. The residue at position 270 (T270) is a Phosphothreonine. The residue at position 275 (K275) is an N6-acetyllysine; alternate. K275 is covalently cross-linked (Glycyl lysine isopeptide (Lys-Gly) (interchain with G-Cter in SUMO1); alternate). Residue K275 forms a Glycyl lysine isopeptide (Lys-Gly) (interchain with G-Cter in SUMO2); alternate linkage. Residue K275 forms a Glycyl lysine isopeptide (Lys-Gly) (interchain with G-Cter in ubiquitin); alternate linkage. Residue S281 is modified to Phosphoserine.

Belongs to the universal ribosomal protein uS5 family. In terms of assembly, component of the small ribosomal subunit. Interacts with zinc finger protein ZNF277 (via zinc-finger domains); the interaction is direct; the interaction is extra-ribosomal. Interaction with ZNF277 competes with the binding of RPS2 to protein arginine methyltransferase PRMT3. Citrullinated by PADI4 in the Arg/Gly-rich region. Post-translationally, asymmetric arginine dimethylation by PRMT3 occurs at multiple sites in the Arg/Gly-rich region. In terms of processing, monoubiquitinated at Lys-54 and Lys-58 by RNF10 when a ribosome has stalled during translation, leading to its degradation by the proteasome. Deubiquitinated at Lys-54 and Lys-58 by USP10, preventing degradation by the proteasome and promoting 40S ribosome subunit recycling following ribosome dissociation.

It is found in the cytoplasm. It localises to the nucleus. The protein localises to the nucleolus. Functionally, component of the ribosome, a large ribonucleoprotein complex responsible for the synthesis of proteins in the cell. The small ribosomal subunit (SSU) binds messenger RNAs (mRNAs) and translates the encoded message by selecting cognate aminoacyl-transfer RNA (tRNA) molecules. The large subunit (LSU) contains the ribosomal catalytic site termed the peptidyl transferase center (PTC), which catalyzes the formation of peptide bonds, thereby polymerizing the amino acids delivered by tRNAs into a polypeptide chain. The nascent polypeptides leave the ribosome through a tunnel in the LSU and interact with protein factors that function in enzymatic processing, targeting, and the membrane insertion of nascent chains at the exit of the ribosomal tunnel. Plays a role in the assembly and function of the 40S ribosomal subunit. Mutations in this protein affects the control of translational fidelity. Involved in nucleolar processing of pre-18S ribosomal RNA and ribosome assembly. In Rattus norvegicus (Rat), this protein is Small ribosomal subunit protein uS5 (Rps2).